We begin with the raw amino-acid sequence, 218 residues long: Probable GTP-binding protein EngB (218 aa).

In terms of domain architecture, EngB-type G spans 31-205; sequence SGIEIAFAGR…EQKVTSWYAQ (175 aa). GTP is bound by residues 39–46, 66–70, 84–87, 151–154, and 184–186; these read GRSNAGKS, GRTQL, DLPG, TKAD, and FSS. Ser46 and Thr68 together coordinate Mg(2+).

This sequence belongs to the TRAFAC class TrmE-Era-EngA-EngB-Septin-like GTPase superfamily. EngB GTPase family. Requires Mg(2+) as cofactor.

Functionally, necessary for normal cell division and for the maintenance of normal septation. The protein is Probable GTP-binding protein EngB of Psychromonas ingrahamii (strain DSM 17664 / CCUG 51855 / 37).